The primary structure comprises 322 residues: Acetyl-coenzyme A carboxylase carboxyl transferase subunit alpha 2 (322 aa).

One can recognise a CoA carboxyltransferase C-terminal domain in the interval 37–294; that stretch reads EINRLSARSE…KRVLQESLRN (258 aa).

This sequence belongs to the AccA family. Acetyl-CoA carboxylase is a heterohexamer composed of biotin carboxyl carrier protein (AccB), biotin carboxylase (AccC) and two subunits each of ACCase subunit alpha (AccA) and ACCase subunit beta (AccD).

It is found in the cytoplasm. The enzyme catalyses N(6)-carboxybiotinyl-L-lysyl-[protein] + acetyl-CoA = N(6)-biotinyl-L-lysyl-[protein] + malonyl-CoA. The protein operates within lipid metabolism; malonyl-CoA biosynthesis; malonyl-CoA from acetyl-CoA: step 1/1. Functionally, component of the acetyl coenzyme A carboxylase (ACC) complex. First, biotin carboxylase catalyzes the carboxylation of biotin on its carrier protein (BCCP) and then the CO(2) group is transferred by the carboxyltransferase to acetyl-CoA to form malonyl-CoA. In terms of biological role, confers resistance to the endogenous polyketide antibiotic thailandamide. Can replace the endogenous gene in S.typhimurium, conferring slow growth and resistance to thailandamide. Can also replace the endogenous gene in E.coli, conferring resistance to thailandamide. The sequence is that of Acetyl-coenzyme A carboxylase carboxyl transferase subunit alpha 2 from Burkholderia thailandensis (strain ATCC 700388 / DSM 13276 / CCUG 48851 / CIP 106301 / E264).